Consider the following 351-residue polypeptide: DNA polymerase IV (351 aa).

The UmuC domain maps to 4 to 185 (IIHVDMDCFF…LPLAKIPGVG (182 aa)). Mg(2+)-binding residues include Asp-8 and Asp-103. Glu-104 is a catalytic residue.

This sequence belongs to the DNA polymerase type-Y family. Monomer. Requires Mg(2+) as cofactor.

The protein resides in the cytoplasm. The enzyme catalyses DNA(n) + a 2'-deoxyribonucleoside 5'-triphosphate = DNA(n+1) + diphosphate. Its function is as follows. Poorly processive, error-prone DNA polymerase involved in untargeted mutagenesis. Copies undamaged DNA at stalled replication forks, which arise in vivo from mismatched or misaligned primer ends. These misaligned primers can be extended by PolIV. Exhibits no 3'-5' exonuclease (proofreading) activity. May be involved in translesional synthesis, in conjunction with the beta clamp from PolIII. This Escherichia coli O157:H7 protein is DNA polymerase IV.